The chain runs to 88 residues: MLSSDQRGSIIENYQLHEKDTGSPEVQIALLSARIEYLTDHFKVHKKDHHSRRGLLKLVGQRRRLLDYLKNKNIERYRQVIQRLGLRK.

Belongs to the universal ribosomal protein uS15 family. As to quaternary structure, part of the 30S ribosomal subunit. Forms a bridge to the 50S subunit in the 70S ribosome, contacting the 23S rRNA.

In terms of biological role, one of the primary rRNA binding proteins, it binds directly to 16S rRNA where it helps nucleate assembly of the platform of the 30S subunit by binding and bridging several RNA helices of the 16S rRNA. Functionally, forms an intersubunit bridge (bridge B4) with the 23S rRNA of the 50S subunit in the ribosome. In Syntrophus aciditrophicus (strain SB), this protein is Small ribosomal subunit protein uS15.